A 156-amino-acid polypeptide reads, in one-letter code: 13 kDa prolamin C (156 aa).

The first 19 residues, 1–19, serve as a signal peptide directing secretion; sequence MKIIFVFALLAIVACNASA. The interval 77-84 is octapeptide unique to cereal prolamins; that stretch reads QQQCCQQL.

This sequence belongs to the prolamin family.

It is found in the vacuole. The protein resides in the aleurone grain. Functionally, seed storage protein; serves as a source of nitrogen, carbon and sulfur for the young developing seedling. In Oryza sativa subsp. japonica (Rice), this protein is 13 kDa prolamin C (PROLM25).